Reading from the N-terminus, the 474-residue chain is MAAAVSTVGAINRAPLSLNGSGSGAVSAPASTFLGKKVVTVSRFAQSNKKSNGSFKVLAVKEDKQTDGDRWRGLAYDTSDDQQDITRGKGMVDSVFQAPMGTGTHHAVLSSYEYVSQGLRQYNLDNMMDGFYIAPAFMDKLVVHITKNFLTLPNIKVPLILGIWGGKGQGKSFQCELVMAKMGINPIMMSAGELESGNAGEPAKLIRQRYREAADLIKKGKMCCLFINDLDAGAGRMGGTTQYTVNNQMVNATLMNIADNPTNVQLPGMYNKEENARVPIICTGNDFSTLYAPLIRDGRMEKFYWAPTREDRIGVCKGIFRTDKIKDEDIVTLVDQFPGQSIDFFGALRARVYDDEVRKFVESLGVEKIGKRLVNSREGPPVFEQPEMTYEKLMEYGNMLVMEQENVKRVQLAETYLSQAALGDANADAIGRGTFYGKGAQQVNLPVPEGCTDPVAENFDPTARSDDGTCVYNF.

Residues 1-58 (MAAAVSTVGAINRAPLSLNGSGSGAVSAPASTFLGKKVVTVSRFAQSNKKSNGSFKVL) constitute a chloroplast transit peptide. The residue at position 78 (Thr78) is a Phosphothreonine; by CK2. ATP is bound at residue 165 to 172 (GGKGQGKS). Thr283 carries the post-translational modification Phosphothreonine.

The protein belongs to the RuBisCO activase family. Phosphorylated at Thr-78 by CK2.

It localises to the plastid. It is found in the chloroplast stroma. Its subcellular location is the chloroplast. The protein localises to the plastoglobule. Functionally, activation of RuBisCO (ribulose-1,5-bisphosphate carboxylase/oxygenase; EC 4.1.1.39) involves the ATP-dependent carboxylation of the epsilon-amino group of lysine leading to a carbamate structure. In Arabidopsis thaliana (Mouse-ear cress), this protein is Ribulose bisphosphate carboxylase/oxygenase activase, chloroplastic (RCA).